The sequence spans 40 residues: Photosystem II reaction center protein J (40 aa).

The chain crosses the membrane as a helical span at residues 8 to 28 (IPLWLVATVAGLAAIGVLGIF).

The protein belongs to the PsbJ family. As to quaternary structure, PSII is composed of 1 copy each of membrane proteins PsbA, PsbB, PsbC, PsbD, PsbE, PsbF, PsbH, PsbI, PsbJ, PsbK, PsbL, PsbM, PsbT, PsbX, PsbY, PsbZ, Psb30/Ycf12, at least 3 peripheral proteins of the oxygen-evolving complex and a large number of cofactors. It forms dimeric complexes.

It localises to the plastid. The protein resides in the cyanelle thylakoid membrane. Its function is as follows. One of the components of the core complex of photosystem II (PSII). PSII is a light-driven water:plastoquinone oxidoreductase that uses light energy to abstract electrons from H(2)O, generating O(2) and a proton gradient subsequently used for ATP formation. It consists of a core antenna complex that captures photons, and an electron transfer chain that converts photonic excitation into a charge separation. In Cyanophora paradoxa, this protein is Photosystem II reaction center protein J.